The chain runs to 3411 residues: Genome polyprotein (3411 aa).

Over 1 to 104 the chain is Cytoplasmic; it reads MSGRKAQGKT…LSSRKRRSHD (104 aa). Residues 38–72 are hydrophobic; homodimerization of capsid protein C; sequence PGPSRGVQGFIFFFLFNILTGKKITAQLKRLWKML. Positions 102-121 are cleaved as a propeptide — ER anchor for the capsid protein C, removed in mature form by serine protease NS3; it reads SHDVLTVQFLILGMLLMTGG. A helical transmembrane segment spans residues 105–125; that stretch reads VLTVQFLILGMLLMTGGVTLM. Topologically, residues 126–244 are extracellular; the sequence is RKNRWLLLNV…GERQLQKIER (119 aa). Asn-134 and Asn-150 each carry an N-linked (GlcNAc...) asparagine; by host glycan. Residues 245–265 form a helical membrane-spanning segment; it reads WFVRNPFFAVTALTIAYLVGS. Topologically, residues 266–270 are cytoplasmic; that stretch reads NMTQR. Residues 271-285 form a helical membrane-spanning segment; the sequence is VVIALLVLAVGPAYS. Residues 286 to 730 lie on the Extracellular side of the membrane; it reads AHCIGVADRD…TVFGSAFQGL (445 aa). 8 cysteine pairs are disulfide-bonded: Cys-288/Cys-315, Cys-345/Cys-401, Cys-345/Cys-406, Cys-359/Cys-390, Cys-377/Cys-401, Cys-377/Cys-406, Cys-467/Cys-568, and Cys-585/Cys-615. Residues 383–396 form a fusion peptide region; it reads DRGWGNGCGLFGKG. Residues 731–751 form a helical membrane-spanning segment; sequence FGGLNWITKVIMGAVLIWVGF. Topologically, residues 752-757 are cytoplasmic; the sequence is NTRNMT. The helical transmembrane segment at 758-778 threads the bilayer; sequence MSMSMILVGVIMMFLSLGVGA. Residues 779–1132 are Extracellular-facing; it reads DQGCAINFGK…LVRSWVTAGE (354 aa). Intrachain disulfides connect Cys-782–Cys-793, Cys-833–Cys-921, Cys-957–Cys-1002, Cys-1058–Cys-1107, Cys-1069–Cys-1091, and Cys-1090–Cys-1094. Asn-908 and Asn-986 each carry an N-linked (GlcNAc...) asparagine; by host glycan. Residues 1133-1153 traverse the membrane as a helical segment; sequence IHAVPFGLVSMMIAMEVVLRK. Over 1154 to 1201 the chain is Cytoplasmic; sequence RQGPKQVLVGGVVLLGAMLVGQVTLLDLLELTVAVGLHFHEMNNGGDA. The chain crosses the membrane as a helical span at residues 1202 to 1222; that stretch reads MYMALIAAFSVRPGLLIGFGL. Topologically, residues 1223–1287 are lumenal; the sequence is RTLWSPRERL…ILPLMALLTP (65 aa). The chain crosses the membrane as a helical span at residues 1288–1308; sequence VTMAEVRLATMLFCTVVIIGV. Residues 1309–1355 lie on the Cytoplasmic side of the membrane; that stretch reads LHQNSKDTSMQKTIPLVALTLTSYLGLTQPFLGLCAFLATRIFGRRS. The chain crosses the membrane as a helical span at residues 1356-1376; that stretch reads IPVNEALAATGLVGVLAGLAF. The Lumenal segment spans residues 1377-1378; the sequence is QE. The helical transmembrane segment at 1379–1399 threads the bilayer; that stretch reads MENFLGPIAVGGILMMLVSVA. The Cytoplasmic segment spans residues 1400–1456; sequence GRVDGLELKKLGEVSWEEEAEISGSSARYDVALSEQGEFKLLSEEKVPWDQVVMTSL. The tract at residues 1407–1446 is interacts with and activates NS3 protease; it reads LKKLGEVSWEEEAEISGSSARYDVALSEQGEFKLLSEEKV. The helical intramembrane region spans 1457-1477; sequence ALVGAAIHPFALLLVLAGWLF. The Cytoplasmic portion of the chain corresponds to 1478–2157; the sequence is HVRRARRSGD…RNALSMMPEA (680 aa). The region spanning 1485-1665 is the Peptidase S7 domain; the sequence is SGDVLWDIPT…EVKEEGKEEL (181 aa). Residues His-1537, Asp-1561, and Ser-1622 each act as charge relay system; for serine protease NS3 activity in the active site. The Helicase ATP-binding domain occupies 1669-1825; the sequence is PTMLKKGKTT…HSNGEIEDVQ (157 aa). The tract at residues 1673–1676 is important for RNA-binding; it reads KKGK. Residue 1682 to 1689 coordinates ATP; it reads FHPGAGKT. The DEAH box motif lies at 1773–1776; that stretch reads DEAH. The 178-residue stretch at 1820-1997 folds into the Helicase C-terminal domain; sequence EIEDVQTDIP…VRGGMVAPLY (178 aa). Lys-1877 carries the post-translational modification N6-acetyllysine; by host. Positions 1942-1961 are disordered; the sequence is AAQRRGRIGRNPNRDGDSYY. Residues 2158 to 2178 form a helical membrane-spanning segment; that stretch reads MTIVMLFLLAGLLTSGMVIFF. At 2179-2186 the chain is on the lumenal side; it reads MSPKGISR. An intramembrane region (helical) is located at residues 2187 to 2207; the sequence is MSMAKGTMAGCGYLMFLGGVE. At 2208–2209 the chain is on the lumenal side; sequence PT. Residues 2210–2230 form a helical membrane-spanning segment; the sequence is HISYIMLIFFVLMVVVIPEPG. Residues 2231-2241 are Cytoplasmic-facing; it reads QQRSIQDNQVA. A helical transmembrane segment spans residues 2242–2256; that stretch reads FLIIGILTLVSVVAA. Topologically, residues 2257 to 2293 are lumenal; it reads NELGMLEKTKEDLFGKKNLIPSGASPWSWPDLDLKPG. Residues 2294-2314 constitute an intramembrane region (helical); that stretch reads AAWTVYVGIVTMLSPMLHHWI. Over 2315–2360 the chain is Lumenal; the sequence is KVEYGNLSLSGIAQSASVLSFMDKGIPFMKMNISVIMLLVSGWNSI. The helical transmembrane segment at 2361–2380 threads the bilayer; the sequence is TVMPLLCGIGCAMLHWSLIL. At 2381 to 2421 the chain is on the cytoplasmic side; the sequence is PGIKAQQSKLAQRRVFHGVAKNPVVDGNPTVDIEEAPEMPA. The helical transmembrane segment at 2422–2442 threads the bilayer; it reads LYEKKLALYLLLALSLASVAM. The Lumenal portion of the chain corresponds to 2443-2445; it reads CRT. The helical transmembrane segment at 2446 to 2466 threads the bilayer; that stretch reads PFSLDEGIVLASAALGPLIEG. Residues 2467–3411 are Cytoplasmic-facing; sequence NTSLLWNGPM…DADLQPGELI (945 aa). In terms of domain architecture, mRNA cap 0-1 NS5-type MT spans 2507-2771; that stretch reads GTANGKTLGE…DVTLPIGTRS (265 aa). Ser-2562 contacts S-adenosyl-L-methionine. Ser-2562 bears the Phosphoserine mark. Lys-2567 serves as the catalytic For 2'-O-MTase activity. Residues Gly-2592, Trp-2593, Thr-2610, Leu-2611, Asp-2637, and Val-2638 each contribute to the S-adenosyl-L-methionine site. The active-site For 2'-O-MTase activity is the Asp-2652. Ile-2653 lines the S-adenosyl-L-methionine pocket. Catalysis depends on for 2'-O-MTase activity residues Lys-2688 and Glu-2724. Tyr-2726 provides a ligand contact to S-adenosyl-L-methionine. Positions 2878–2911 match the Nuclear localization signal motif; sequence RKIMKVVNRWLFRHLAREKNPRLCTKEEFIAKVR. Zn(2+)-binding residues include Glu-2945, His-2949, Cys-2954, and Cys-2957. One can recognise a RdRp catalytic domain in the interval 3035-3187; that stretch reads GGLYADDTAG…RPIDDRFGLA (153 aa). Residues His-3222, Cys-3238, and Cys-3357 each coordinate Zn(2+).

It in the N-terminal section; belongs to the class I-like SAM-binding methyltransferase superfamily. mRNA cap 0-1 NS5-type methyltransferase family. Homodimer. Interacts (via N-terminus) with host EXOC1 (via C-terminus); this interaction results in EXOC1 degradation through the proteasome degradation pathway. As to quaternary structure, forms heterodimers with envelope protein E in the endoplasmic reticulum and Golgi. In terms of assembly, homodimer; in the endoplasmic reticulum and Golgi. Interacts with protein prM. Interacts with non-structural protein 1. Homodimer; Homohexamer when secreted. Interacts with envelope protein E. As to quaternary structure, interacts (via N-terminus) with serine protease NS3. In terms of assembly, forms a heterodimer with serine protease NS3. May form homooligomers. Forms a heterodimer with NS2B. Interacts with non-structural protein 2A (via N-terminus). Interacts with NS4B. Interacts with unphosphorylated RNA-directed RNA polymerase NS5; this interaction stimulates RNA-directed RNA polymerase NS5 guanylyltransferase activity. NS3 interacts with host PDCD6IP; this interaction contributes to virion release. As to quaternary structure, interacts with serine protease NS3. In terms of assembly, homodimer. Interacts with host STAT2; this interaction prevents the establishment of cellular antiviral state. Interacts with serine protease NS3. Interacts with host TRIM23; this interaction leads to NS5 ubiquitination. In terms of processing, specific enzymatic cleavages in vivo yield mature proteins. The nascent capsid protein C contains a C-terminal hydrophobic domain that act as a signal sequence for translocation of prM into the lumen of the ER. Mature capsid protein C is cleaved at a site upstream of this hydrophobic domain by NS3. prM is cleaved in post-Golgi vesicles by a host furin, releasing the mature small envelope protein M, and peptide pr. Non-structural protein 2A-alpha, a C-terminally truncated form of non-structural protein 2A, results from partial cleavage by NS3. Specific enzymatic cleavages in vivo yield mature proteins peptide 2K acts as a signal sequence and is removed from the N-terminus of NS4B by the host signal peptidase in the ER lumen. Signal cleavage at the 2K-4B site requires a prior NS3 protease-mediated cleavage at the 4A-2K site. Cleaved in post-Golgi vesicles by a host furin, releasing the mature small envelope protein M, and peptide pr. This cleavage is incomplete as up to 30% of viral particles still carry uncleaved prM. Post-translationally, N-glycosylated. In terms of processing, N-glycosylated. The excreted form is glycosylated and this is required for efficient secretion of the protein from infected cells. Polyubiquitinated; ubiquitination is probably mediated by host TRIM23 and is prerequisite for NS5-STAT2 interaction. NS5 is not ISGylated or sumoylated. Post-translationally, acetylated by host KAT5. Acetylation modulates NS3 RNA-binding and unwinding activities and plays an important positive role for viral replication. In terms of processing, phosphorylated on serines residues. This phosphorylation may trigger NS5 nuclear localization.

It localises to the virion. It is found in the host nucleus. The protein localises to the host cytoplasm. Its subcellular location is the host perinuclear region. The protein resides in the secreted. It localises to the virion membrane. It is found in the host endoplasmic reticulum membrane. It catalyses the reaction Selective hydrolysis of -Xaa-Xaa-|-Yaa- bonds in which each of the Xaa can be either Arg or Lys and Yaa can be either Ser or Ala.. The enzyme catalyses RNA(n) + a ribonucleoside 5'-triphosphate = RNA(n+1) + diphosphate. It carries out the reaction a ribonucleoside 5'-triphosphate + H2O = a ribonucleoside 5'-diphosphate + phosphate + H(+). The catalysed reaction is ATP + H2O = ADP + phosphate + H(+). It catalyses the reaction a 5'-end (5'-triphosphoguanosine)-ribonucleoside in mRNA + S-adenosyl-L-methionine = a 5'-end (N(7)-methyl 5'-triphosphoguanosine)-ribonucleoside in mRNA + S-adenosyl-L-homocysteine. The enzyme catalyses a 5'-end (N(7)-methyl 5'-triphosphoguanosine)-ribonucleoside in mRNA + S-adenosyl-L-methionine = a 5'-end (N(7)-methyl 5'-triphosphoguanosine)-(2'-O-methyl-ribonucleoside) in mRNA + S-adenosyl-L-homocysteine + H(+). In terms of biological role, plays a role in virus budding by binding to the cell membrane and gathering the viral RNA into a nucleocapsid that forms the core of a mature virus particle. During virus entry, may induce genome penetration into the host cytoplasm after hemifusion induced by the surface proteins. Can migrate to the cell nucleus where it modulates host functions. Inhibits RNA silencing by interfering with host Dicer. Functionally, prevents premature fusion activity of envelope proteins in trans-Golgi by binding to envelope protein E at pH6.0. After virion release in extracellular space, gets dissociated from E dimers. Its function is as follows. Acts as a chaperone for envelope protein E during intracellular virion assembly by masking and inactivating envelope protein E fusion peptide. prM is the only viral peptide matured by host furin in the trans-Golgi network probably to avoid catastrophic activation of the viral fusion activity in acidic Golgi compartment prior to virion release. prM-E cleavage is inefficient, and many virions are only partially matured. These uncleaved prM would play a role in immune evasion. In terms of biological role, may play a role in virus budding. Exerts cytotoxic effects by activating a mitochondrial apoptotic pathway through M ectodomain. May display a viroporin activity. Binds to host cell surface receptor and mediates fusion between viral and cellular membranes. Envelope protein is synthesized in the endoplasmic reticulum in the form of heterodimer with protein prM. They play a role in virion budding in the ER, and the newly formed immature particle is covered with 60 spikes composed of heterodimer between precursor prM and envelope protein E. The virion is transported to the Golgi apparatus where the low pH causes dissociation of PrM-E heterodimers and formation of E homodimers. prM-E cleavage is inefficient, and many virions are only partially matured. These uncleaved prM would play a role in immune evasion. Functionally, involved in immune evasion, pathogenesis and viral replication. Once cleaved off the polyprotein, is targeted to three destinations: the viral replication cycle, the plasma membrane and the extracellular compartment. Essential for viral replication. Required for formation of the replication complex and recruitment of other non-structural proteins to the ER-derived membrane structures. Excreted as a hexameric lipoparticle that plays a role against host immune response. Antagonizing the complement function. Binds to the host macrophages and dendritic cells. Inhibits signal transduction originating from Toll-like receptor 3 (TLR3). Its function is as follows. Component of the viral RNA replication complex that functions in virion assembly and antagonizes the host immune response. In terms of biological role, required cofactor for the serine protease function of NS3. May have membrane-destabilizing activity and form viroporins. Displays three enzymatic activities: serine protease, NTPase and RNA helicase. NS3 serine protease, in association with NS2B, performs its autocleavage and cleaves the polyprotein at dibasic sites in the cytoplasm: C-prM, NS2A-NS2B, NS2B-NS3, NS3-NS4A, NS4A-2K and NS4B-NS5. NS3 RNA helicase binds RNA and unwinds dsRNA in the 3' to 5' direction. Also plays a role in virus assembly. Functionally, regulates the ATPase activity of the NS3 helicase activity. NS4A allows NS3 helicase to conserve energy during unwinding. Its function is as follows. Functions as a signal peptide for NS4B and is required for the interferon antagonism activity of the latter. In terms of biological role, induces the formation of ER-derived membrane vesicles where the viral replication takes place. Inhibits interferon (IFN)-induced host STAT1 phosphorylation and nuclear translocation, thereby preventing the establishment of cellular antiviral state by blocking the IFN-alpha/beta pathway. Replicates the viral (+) and (-) RNA genome, and performs the capping of genomes in the cytoplasm. NS5 methylates viral RNA cap at guanine N-7 and ribose 2'-O positions. Besides its role in RNA genome replication, also prevents the establishment of cellular antiviral state by blocking the interferon-alpha/beta (IFN-alpha/beta) signaling pathway. IFN-I induces binding of NS5 to host IFN-activated transcription factor STAT2, preventing its transcriptional activity. Host TRIM23 is the E3 ligase that interacts with and polyubiquitinates NS5 to promote its binding to STAT2 and trigger IFN-I signaling inhibition. The sequence is that of Genome polyprotein from Aedes aegypti (Yellowfever mosquito).